The primary structure comprises 337 residues: Methionine import ATP-binding protein MetN (337 aa).

An ABC transporter domain is found at 4–240 (IKNLEITYPG…PWHPITKEFV (237 aa)). 37 to 44 (GLSGAGKS) is a binding site for ATP.

It belongs to the ABC transporter superfamily. Methionine importer (TC 3.A.1.24) family. As to quaternary structure, the complex is composed of two ATP-binding proteins (MetN), two transmembrane proteins (MetI) and a solute-binding protein (MetQ).

It is found in the cell membrane. It carries out the reaction L-methionine(out) + ATP + H2O = L-methionine(in) + ADP + phosphate + H(+). It catalyses the reaction D-methionine(out) + ATP + H2O = D-methionine(in) + ADP + phosphate + H(+). In terms of biological role, part of the ABC transporter complex MetNIQ involved in methionine import. Responsible for energy coupling to the transport system. The chain is Methionine import ATP-binding protein MetN from Carboxydothermus hydrogenoformans (strain ATCC BAA-161 / DSM 6008 / Z-2901).